We begin with the raw amino-acid sequence, 631 residues long: Mu-like prophage FluMu protein gp42 (631 aa).

A run of 2 helical transmembrane segments spans residues 56–76 and 385–405; these read LGNI…TMVG and GLAD…PVYV. The tract at residues 425 to 453 is disordered; that stretch reads IEDGRDKDKKTQKKNKPPRPKRGRGSVRS. Basic residues predominate over residues 434 to 449; sequence KTQKKNKPPRPKRGRG. 3 helical membrane passes run 455-475, 495-515, and 543-563; these read VAAV…VTTA, SKAV…TVLM, and ALIP…GWLG.

It to phage Mu protein gp42.

Its subcellular location is the cell membrane. This is Mu-like prophage FluMu protein gp42 from Haemophilus influenzae (strain ATCC 51907 / DSM 11121 / KW20 / Rd).